A 375-amino-acid polypeptide reads, in one-letter code: Adiponectin receptor protein 1 (375 aa).

Residues 1-60 (MSSHKGSVVAQGNGAPASNREADTVELAELGPLLEEKGKRVIANPPKAEEEQTCPVPQEE) are disordered. At 1–136 (MSSHKGSVVA…SIFRIHTETG (136 aa)) the chain is on the cytoplasmic side. The chain crosses the membrane as a helical span at residues 137-157 (NIWTHLLGFVLFLFLGILTML). Residues 158–170 (RPNMYFMAPLQEK) lie on the Extracellular side of the membrane. Residues 171 to 191 (VVFGMFFLGAVLCLSFSWLFH) traverse the membrane as a helical segment. Position 191 (His-191) interacts with Zn(2+). Topologically, residues 192–203 (TVYCHSEKVSRT) are cytoplasmic. The helical transmembrane segment at 204-224 (FSKLDYSGIALLIMGSFVPWL) threads the bilayer. Residues 225-234 (YYSFYCSPQP) are Extracellular-facing. Residues 235–255 (RLIYLSIVCVLGISAIIVAQW) traverse the membrane as a helical segment. The Cytoplasmic portion of the chain corresponds to 256-264 (DRFATPKHR). Residues 265–285 (QTRAGVFLGLGLSGVVPTMHF) traverse the membrane as a helical segment. Topologically, residues 286–298 (TIAEGFVKATTVG) are extracellular. Residues 299-319 (QMGWFFLMAVMYITGAGLYAA) traverse the membrane as a helical segment. Topologically, residues 320 to 337 (RIPERFFPGKFDIWFQSH) are cytoplasmic. 2 residues coordinate Zn(2+): His-337 and His-341. A helical transmembrane segment spans residues 338–358 (QIFHVLVVAAAFVHFYGVSNL). Over 359-375 (QEFRYGLEGGCTDDTLL) the chain is Extracellular.

The protein belongs to the ADIPOR family. May form homooligomers and heterooligomers with ADIPOR2. Interacts with APPL2 (via BAR domain); hinders the accessibility of APPL1 to ADIPOR1; negatively regulates adiponectin signaling; ADIPOQ dissociates this interaction and facilitates the recruitment of APPL1 to ADIPOR1. Interacts with APPL1; ADIPOQ enhances this interaction; inhibites adiponectin-stimulated binding of APPL2 to ADIPOR1. As to expression, widely expressed. Highly expressed in heart and skeletal muscle. Expressed at intermediate level in brain, spleen, kidney, liver, placenta, lung and peripheral blood leukocytes. Weakly expressed in colon, thymus and small intestine.

The protein resides in the cell membrane. In terms of biological role, receptor for ADIPOQ, an essential hormone secreted by adipocytes that regulates glucose and lipid metabolism. Required for normal glucose and fat homeostasis and for maintaining a normal body weight. ADIPOQ-binding activates a signaling cascade that leads to increased AMPK activity, and ultimately to increased fatty acid oxidation, increased glucose uptake and decreased gluconeogenesis. Has high affinity for globular adiponectin and low affinity for full-length adiponectin. The protein is Adiponectin receptor protein 1 of Homo sapiens (Human).